Consider the following 92-residue polypeptide: LYR motif-containing protein 4 homolog (92 aa).

Residues 40-68 (ANKAIRDFAEIDRQMEAGKQNLELIRRQV) adopt a coiled-coil conformation.

It belongs to the complex I LYR family. Component of the mitochondrial core iron-sulfur cluster (ISC) assembly complex at least composed of the cysteine desulfurase Nfs1, the scaffold protein IscU, the accessory protein bcn92/Isd11/Lyrm4, and probably fh/frataxin. Interacts with Nfs1.

The protein resides in the mitochondrion. Stabilizing factor of the core iron-sulfur cluster (ISC) assembly complex that regulates the stability and cysteine desulfurase activity of Nfs1 and participates in the [2Fe-2S] clusters assembly on the scaffolding protein IscU. In Drosophila subobscura (Fruit fly), this protein is LYR motif-containing protein 4 homolog.